Reading from the N-terminus, the 359-residue chain is Dihydroorotate dehydrogenase (quinone) (359 aa).

Residues 65–69 and threonine 89 contribute to the FMN site; that span reads AGLDK. Lysine 69 contacts substrate. 114 to 118 contributes to the substrate binding site; it reads NRLGF. The FMN site is built by asparagine 149 and asparagine 182. Asparagine 182 provides a ligand contact to substrate. The Nucleophile role is filled by serine 185. Asparagine 187 contributes to the substrate binding site. FMN contacts are provided by lysine 233 and threonine 261. Substrate is bound at residue 262–263; it reads NT. FMN-binding positions include glycine 284, glycine 313, and 334 to 335; that span reads YT.

This sequence belongs to the dihydroorotate dehydrogenase family. Type 2 subfamily. Monomer. FMN serves as cofactor.

It localises to the cell membrane. The catalysed reaction is (S)-dihydroorotate + a quinone = orotate + a quinol. The protein operates within pyrimidine metabolism; UMP biosynthesis via de novo pathway; orotate from (S)-dihydroorotate (quinone route): step 1/1. Catalyzes the conversion of dihydroorotate to orotate with quinone as electron acceptor. This Paracidovorax citrulli (strain AAC00-1) (Acidovorax citrulli) protein is Dihydroorotate dehydrogenase (quinone).